Here is a 136-residue protein sequence, read N- to C-terminus: Ig heavy chain V region XIG8 (136 aa).

Positions 1–18 (GFGIFVIFMFFSPSCILS) are cleaved as a signal peptide. Residues 19 to 128 (QTLQESGPGT…TAGYFEHWGQ (110 aa)) enclose the Ig-like domain.

The sequence is that of Ig heavy chain V region XIG8 from Xenopus laevis (African clawed frog).